A 158-amino-acid polypeptide reads, in one-letter code: Small ribosomal subunit protein uS9 (158 aa).

The segment at 1–20 (MTEAVETETVEPTTDEATAA) is disordered. A compositionally biased stretch (low complexity) spans 10-20 (VEPTTDEATAA).

The protein belongs to the universal ribosomal protein uS9 family.

The polypeptide is Small ribosomal subunit protein uS9 (Mycobacterium sp. (strain JLS)).